Reading from the N-terminus, the 205-residue chain is Guanylyl cyclase-activating protein 1 (205 aa).

Gly-2 is lipidated: N-myristoyl glycine. Position 3 is a deamidated asparagine (Asn-3). EF-hand domains follow at residues 30–48 (SGQL…KNLS), 50–85 (ASNQ…VLKG), 86–121 (KVEQ…IRAI), and 129–164 (TAEE…DELL). 15 residues coordinate Ca(2+): Asp-63, Asn-65, Asp-67, Tyr-69, Glu-74, Asp-99, Asp-101, Asn-103, Cys-105, Glu-110, Asp-142, Asn-144, Asp-146, Glu-148, and Glu-153.

In terms of tissue distribution, retina.

In terms of biological role, regulatory protein that inhibits guanylyl cyclase when free calcium ions concentration is elevated. This Ca(2+)-sensitive regulation of retinal guanylyl cyclase is a key event in recovery of the dark state of rod photoreceptors following light exposure. This chain is Guanylyl cyclase-activating protein 1 (GUCA1A), found in Lithobates pipiens (Northern leopard frog).